The sequence spans 267 residues: Alkaline ceramidase 3 (267 aa).

Topologically, residues 1-33 (MAPAVDRKGYWGPTTSTLDWCEENYVVTLFVAE) are cytoplasmic. Ca(2+)-binding residues include D19, W20, E22, N24, and E33. Residues 34–55 (FWNTVSNLIMIIPPIFGAIQGI) form a helical membrane-spanning segment. Residues 56 to 61 (RDRLEK) are Lumenal-facing. The helical transmembrane segment at 62–82 (RYIAAYLALTVVGMGSWCFHM) threads the bilayer. H81 is a binding site for Zn(2+). At 83-87 (TLKYE) the chain is on the cytoplasmic side. Residues 88 to 108 (MQLLDELPMIYSCCIFVYCMF) form a helical membrane-spanning segment. The Lumenal segment spans residues 109–118 (ECFKTKSSIN). A helical transmembrane segment spans residues 119-139 (YHLLFTLFLYSLTVTTIYLKV). Over 140–141 (KE) the chain is Cytoplasmic. The helical transmembrane segment at 142–162 (PIFHQVMYGMLVFTLVLRSIY) threads the bilayer. Residues 163-173 (IVTWVYPWLRG) are Lumenal-facing. The helical transmembrane segment at 174-194 (LGYTSLTVFLLGFLLWNIDNI) threads the bilayer. Residues 195–215 (FCDSLRNFRKRVPPVLGVTTQ) are Cytoplasmic-facing. Residues 216 to 236 (FHAWWHILTGLGSYLHILFSL) traverse the membrane as a helical segment. Zn(2+)-binding residues include H217 and H221. Residues 237 to 267 (YTRTLYLRYRPKVKFLFGIWPAVMFEPQRKH) are Lumenal-facing.

The protein belongs to the alkaline ceramidase family. Zn(2+) is required as a cofactor. In terms of tissue distribution, up-regulated with age in cerebeLlum and cerebrum.

It is found in the endoplasmic reticulum membrane. The protein localises to the golgi apparatus membrane. The catalysed reaction is an N-acyl-(4R)-4-hydroxysphinganine + H2O = (4R)-hydroxysphinganine + a fatty acid. It catalyses the reaction N-(5Z,8Z,11Z,14Z-eicosatetraenoyl)-sphing-4-enine + H2O = sphing-4-enine + (5Z,8Z,11Z,14Z)-eicosatetraenoate. It carries out the reaction N-(5Z,8Z,11Z,14Z-eicosatetraenoyl)-sphinganine + H2O = sphinganine + (5Z,8Z,11Z,14Z)-eicosatetraenoate. The enzyme catalyses N-(5Z,8Z,11Z,14Z-eicosatetraenoyl)-(4R)-hydroxysphinganine + H2O = (4R)-hydroxysphinganine + (5Z,8Z,11Z,14Z)-eicosatetraenoate. The catalysed reaction is N-(11Z-eicosenoyl)-sphing-4-enine + H2O = (11Z)-eicosenoate + sphing-4-enine. It catalyses the reaction N-(11Z-eicosenoyl)-sphinganine + H2O = (11Z)-eicosenoate + sphinganine. It carries out the reaction N-(11Z-eicosenoyl)-(4R)-hydroxysphinganine + H2O = (11Z)-eicosenoate + (4R)-hydroxysphinganine. The enzyme catalyses N-(9Z-octadecenoyl)-sphing-4-enine + H2O = sphing-4-enine + (9Z)-octadecenoate. The catalysed reaction is N-(9Z-octadecenoyl)-sphinganine + H2O = sphinganine + (9Z)-octadecenoate. It catalyses the reaction N-(9Z-octadecenoyl)-(4R)-hydroxysphinganine + H2O = (4R)-hydroxysphinganine + (9Z)-octadecenoate. It carries out the reaction an N-acylsphing-4-enine + H2O = sphing-4-enine + a fatty acid. The enzyme catalyses an N-acylsphinganine + H2O = sphinganine + a fatty acid. It participates in lipid metabolism; sphingolipid metabolism. Activated by Ca(2+) and inhibited by Zn(2+). Endoplasmic reticulum and Golgi ceramidase that catalyzes the hydrolysis of unsaturated long-chain C18:1-, C20:1- and C20:4-ceramides, dihydroceramides and phytoceramides into sphingoid bases like sphingosine and free fatty acids at alkaline pH. Ceramides, sphingosine, and its phosphorylated form sphingosine-1-phosphate are bioactive lipids that mediate cellular signaling pathways regulating several biological processes including cell proliferation, apoptosis and differentiation. Controls the generation of sphingosine in erythrocytes, and thereby sphingosine-1-phosphate in plasma. Through the regulation of ceramides and sphingosine-1-phosphate homeostasis in the brain may play a role in neurons survival and function. By regulating the levels of pro-inflammatory ceramides in immune cells and tissues, may modulate the inflammatory response. The protein is Alkaline ceramidase 3 (Acer3) of Mus musculus (Mouse).